The sequence spans 920 residues: MKEYKDTLNLNETTFSMKGNLSVNEPKTYAKWQEQQAFKRMQNRKDNHGDFTLHDGPPYANGHLHLGHALNKILKDIVIKREYFKGKKIYYTPGWDCHGLPIEQQILEQLEKEKTSLENPTLFREKCRDHAKKFLEIQKNEFLQLGVLGDFEDPYKTMDFKFEASIYRALVGVAKKGLLKERHKPIYWSYACESALAEAEVEYKMKKSPSIFVAFDLKKEGLEKLKVKKASLVIWTTTPWTLYANVAIALKKDAVYALTQKGYLVAKALHEKLAALGVVDNAITHEFNSNDLEYLVATNPLNQRDSLVVLGDHVSLEDGTGAVHTAPGHGEEDYYLGLKYHLEVLMSVDEKGCYDEGIIHNQLLDKSYLGEHIFKAQKRIIEQLGDSLLLEREIEHSYPHCWRTHKPVIYRATTQWFILMDEPFIQNDGSQKTLREVALDAIEKVEFVPSSGKNRLKTMIENRPDWCLSRQRKWGVPLAFFIDKRTNKPCFESEVLEHVANLFEEKGCDVWWEYNIKDLLPPSYQDNAKHYEKVMHILDVWFDSGSTFKAVLEDYHGEKGQSPSDVVLEGSDQHRGWFQSSLLIGCVLNNQAPFKKVITHGFIVDEKGEKMSKSKGNVVSLDNLLKKHGSDVVRLWVAFNDYQNDLRVSQTFFIQTEQHYKKFRNTLKFLLANFSDMDLKNLERPHDFSPLDHFILEALETISAGVNSAFEEHDLVKGLNILMAFVTNELSGIYLDACKDSLYCDSKNNEKRQAIQMVLLAVASQLCYFLAPILTHTIEEVLEHSQVLRAFLQAKDVFDLKGISVLEKLHLKEFKKPENFEAVLALRSAFNEELDRLKKEGVVKNSLECAIEVKEKALCENLVEELLMVSFVGVAKEKLSETPAFTLFKAPFYKCPRCWRFKSELENTPCKRCEEVLKER.

Positions 58-68 match the 'HIGH' region motif; that stretch reads PYANGHLHLGH. Position 569 (Glu-569) interacts with L-isoleucyl-5'-AMP. Residues 610–614 carry the 'KMSKS' region motif; it reads KMSKS. An ATP-binding site is contributed by Lys-613. Zn(2+) contacts are provided by Cys-895, Cys-898, Cys-910, and Cys-913.

The protein belongs to the class-I aminoacyl-tRNA synthetase family. IleS type 1 subfamily. Monomer. Zn(2+) is required as a cofactor.

The protein localises to the cytoplasm. The catalysed reaction is tRNA(Ile) + L-isoleucine + ATP = L-isoleucyl-tRNA(Ile) + AMP + diphosphate. Catalyzes the attachment of isoleucine to tRNA(Ile). As IleRS can inadvertently accommodate and process structurally similar amino acids such as valine, to avoid such errors it has two additional distinct tRNA(Ile)-dependent editing activities. One activity is designated as 'pretransfer' editing and involves the hydrolysis of activated Val-AMP. The other activity is designated 'posttransfer' editing and involves deacylation of mischarged Val-tRNA(Ile). The polypeptide is Isoleucine--tRNA ligase (Helicobacter pylori (strain J99 / ATCC 700824) (Campylobacter pylori J99)).